Reading from the N-terminus, the 348-residue chain is Rhodopsin (348 aa).

The residue at position 1 (M1) is an N-acetylmethionine. The Extracellular portion of the chain corresponds to 1 to 36 (MNGTEGPNFYVPFSNITGVVRSPFEQPQYYLAEPWQ). Residues N2 and N15 are each glycosylated (N-linked (GlcNAc...) asparagine). The chain crosses the membrane as a helical span at residues 37 to 61 (FSMLAAYMFLLIVLGFPINFLTLYV). The Cytoplasmic segment spans residues 62-73 (TVQHKKLRTPLN). A helical transmembrane segment spans residues 74-96 (YILLNLAVADLFMVFGGFTTTLY). The Extracellular segment spans residues 97–110 (TSLHGYFVFGPTGC). A disulfide bridge connects residues C110 and C187. Residues 111–133 (NLEGFFATLGGEIGLWSLVVLAI) form a helical membrane-spanning segment. The short motif at 134-136 (ERY) is the 'Ionic lock' involved in activated form stabilization element. The Cytoplasmic portion of the chain corresponds to 134 to 152 (ERYVVVCKPMSNFRFGENH). Residues 153 to 173 (AIMGVAFTWVMALACAAPPLV) traverse the membrane as a helical segment. At 174 to 202 (GWSRYIPEGMQCSCGIDYYTLKPEVNNES) the chain is on the extracellular side. E201 contacts Zn(2+). Residues 203 to 224 (FVIYMFVVHFTIPMIVIFFCYG) traverse the membrane as a helical segment. The Cytoplasmic portion of the chain corresponds to 225–252 (QLVFTVKEAAAQQQESATTQKAEKEVTR). A helical membrane pass occupies residues 253-274 (MVIIMVIFFLICWLPYASVAMY). Over 275–286 (IFTHQGSNFGPI) the chain is Extracellular. Q279 lines the Zn(2+) pocket. A helical transmembrane segment spans residues 287–308 (FMTLPAFFAKTASIYNPIIYIM). K296 is modified (N6-(retinylidene)lysine). The Cytoplasmic segment spans residues 309–348 (MNKQFRNCMLTSLCCGKNPLGDDEASATASKTETSQVAPA). S-palmitoyl cysteine attachment occurs at residues C322 and C323. The tract at residues 330–348 (DDEASATASKTETSQVAPA) is interaction with SAG. S334 carries the phosphoserine modification. Position 336 is a phosphothreonine (T336). Phosphoserine is present on S338. Residues T340 and T342 each carry the phosphothreonine modification. S343 is modified (phosphoserine).

It belongs to the G-protein coupled receptor 1 family. Opsin subfamily. In terms of assembly, homodimer. May form a complex composed of RHO, GRK1 and RCVRN in a Ca(2+)-dependent manner; RCVRN prevents the interaction between GRK1 and RHO. Interacts with GRK1. Interacts (phosphorylated form) with SAG. Interacts with GNAT1. Interacts with GNAT3. SAG and G-proteins compete for a common binding site. Interacts with PRCD; the interaction promotes PRCD stability. Forms a complex with ASAP1 and ARF4. Forms a complex with ASAP1, RAB11A, Rabin8/RAB3IP, ARF4 and RAB11FIP3; the complex regulates Golgi-to-cilia rhodopsin/RHO transport in photoreceptors. In terms of processing, phosphorylated on some or all of the serine and threonine residues present in the C-terminal region. Post-translationally, contains one covalently linked retinal chromophore. Upon light absorption, the covalently bound 11-cis-retinal is converted to all-trans-retinal. After hydrolysis of the Schiff base and release of the covalently bound all-trans-retinal, active rhodopsin is regenerated by binding of a fresh molecule of 11-cis-retinal.

The protein resides in the membrane. It is found in the cell projection. It localises to the cilium. Its subcellular location is the photoreceptor outer segment. Its function is as follows. Photoreceptor required for image-forming vision at low light intensity. Required for photoreceptor cell viability after birth. Light-induced isomerization of 11-cis to all-trans retinal triggers a conformational change that activates signaling via G-proteins. Subsequent receptor phosphorylation mediates displacement of the bound G-protein alpha subunit by the arrestin SAG and terminates signaling. The protein is Rhodopsin (Rho) of Rattus norvegicus (Rat).